A 137-amino-acid polypeptide reads, in one-letter code: Ig heavy chain V region MOPC 315 (137 aa).

The signal sequence occupies residues 1-18 (MKVLSLLYLLTAIPGIMS). The interval 19–48 (DVQLQESGPGLVKPSQSLSLTCSVTGYSIT) is framework-1. A disulfide bridge connects residues Cys-40 and Cys-114. The interval 49-54 (SGYFWN) is complementarity-determining-1. The tract at residues 55–68 (WIRQFPGNKLEWLG) is framework-2. Residues 69–84 (FIKYDGSNGYNPSLKN) are complementarity-determining-2. Positions 85–116 (RVSITRDTSENQFFLKLNSVTTEDTATYYCAG) are framework-3. The segment at 117-126 (DNDHLYYFDY) is complementarity-determining-3. The tract at residues 127-137 (WGQGTTLTVSS) is framework-4.

The protein is Ig heavy chain V region MOPC 315 of Mus musculus (Mouse).